The chain runs to 384 residues: Chaperone protein DnaJ (384 aa).

Positions 5-70 constitute a J domain; it reads DYYEVLGVAR…QKKAAYDRFG (66 aa). A CR-type zinc finger spans residues 138–216; that stretch reads GAQKTINVPG…CRGAGRVQKE (79 aa). The Zn(2+) site is built by Cys-151, Cys-154, Cys-168, Cys-171, Cys-190, Cys-193, Cys-204, and Cys-207. 4 CXXCXGXG motif repeats span residues 151–158, 168–175, 190–197, and 204–211; these read CAACNGTG, CPTCSGMG, CPTCSGHG, and CQECRGAG. The segment at 300–322 is disordered; the sequence is KVPPGTQSGKQLRLRGKGMPPLR.

Belongs to the DnaJ family. As to quaternary structure, homodimer. Zn(2+) is required as a cofactor.

It is found in the cytoplasm. Its function is as follows. Participates actively in the response to hyperosmotic and heat shock by preventing the aggregation of stress-denatured proteins and by disaggregating proteins, also in an autonomous, DnaK-independent fashion. Unfolded proteins bind initially to DnaJ; upon interaction with the DnaJ-bound protein, DnaK hydrolyzes its bound ATP, resulting in the formation of a stable complex. GrpE releases ADP from DnaK; ATP binding to DnaK triggers the release of the substrate protein, thus completing the reaction cycle. Several rounds of ATP-dependent interactions between DnaJ, DnaK and GrpE are required for fully efficient folding. Also involved, together with DnaK and GrpE, in the DNA replication of plasmids through activation of initiation proteins. The sequence is that of Chaperone protein DnaJ from Paracoccus denitrificans (strain Pd 1222).